Consider the following 217-residue polypeptide: Large ribosomal subunit protein uL1 (217 aa).

Position 11 is a phosphotyrosine (Tyr11). N6-acetyllysine is present on residues Lys91 and Lys106. Lys118 bears the N6-acetyllysine; alternate mark. Lys118 is covalently cross-linked (Glycyl lysine isopeptide (Lys-Gly) (interchain with G-Cter in SUMO1); alternate). Lys118 participates in a covalent cross-link: Glycyl lysine isopeptide (Lys-Gly) (interchain with G-Cter in SUMO2); alternate. Residue Lys161 forms a Glycyl lysine isopeptide (Lys-Gly) (interchain with G-Cter in SUMO2) linkage.

The protein belongs to the universal ribosomal protein uL1 family. In terms of assembly, component of the large ribosomal subunit.

The protein resides in the cytoplasm. In terms of biological role, component of the large ribosomal subunit. The ribosome is a large ribonucleoprotein complex responsible for the synthesis of proteins in the cell. The protein is Large ribosomal subunit protein uL1 (RPL10A) of Oryctolagus cuniculus (Rabbit).